The following is a 140-amino-acid chain: Nucleoside diphosphate kinase (140 aa).

The ATP site is built by K11, F59, R87, T93, R104, and N114. The active-site Pros-phosphohistidine intermediate is H117.

The protein belongs to the NDK family. Homotetramer. The cofactor is Mg(2+).

It is found in the cytoplasm. The catalysed reaction is a 2'-deoxyribonucleoside 5'-diphosphate + ATP = a 2'-deoxyribonucleoside 5'-triphosphate + ADP. It carries out the reaction a ribonucleoside 5'-diphosphate + ATP = a ribonucleoside 5'-triphosphate + ADP. Functionally, major role in the synthesis of nucleoside triphosphates other than ATP. The ATP gamma phosphate is transferred to the NDP beta phosphate via a ping-pong mechanism, using a phosphorylated active-site intermediate. This Cereibacter sphaeroides (strain ATCC 17025 / ATH 2.4.3) (Rhodobacter sphaeroides) protein is Nucleoside diphosphate kinase.